The following is a 426-amino-acid chain: Putative competence-damage inducible protein (426 aa).

The protein belongs to the CinA family.

The polypeptide is Putative competence-damage inducible protein (Symbiobacterium thermophilum (strain DSM 24528 / JCM 14929 / IAM 14863 / T)).